Reading from the N-terminus, the 554-residue chain is MASLEHMKRIWGEVLGIEPDEIGLDENFVDLGGDSVGTKALQLLGEVASYNVQIDLETFTNTGTIQTLWEAMNDTQTRNVHSMDGRDYNTDSEGLDVVEAASASIVTKTDTDNDDLALEQARLVQDNVLCVAPISPVQGFFLDLGLAGQIGLINYIFEVEGSDLKHGLAHVTNLLESKNPVFRTLIEKTKESGFVQILVAKTRSSWFYPSDLRLYLEKTMTQKFELGKPAVQYALVMEDAAHEGRNFFVISMHHTHCDAFSRFLIGKEISQILESPSYYARSENIERPWFGNYVKHVQQKATDDKASLFWDAYMCGANLANIYPLHRATLNGEFDGAIIEKIQAPVATRIADGSPRNSTQVILAAWAIALANLSGLRDITFGLCRHGRSSSSFRDVRRLMGPLVNVLPFRVSLICNEEPAPALLQRIQNEITSTNKHEHGFSPCIFPSTDGRPWVQSLVDLKSELHGMGNGPSARSDHLAISKMVPRPDLDTYEMKSHWAVLLSIRQHRNVFQVSMYYQKPLLAEGKAVVLFENFRACIQALSTGQNSVGELLE.

The 76-residue stretch at 1–76 (MASLEHMKRI…TLWEAMNDTQ (76 aa)) folds into the Carrier domain. Ser-35 is subject to O-(pantetheine 4'-phosphoryl)serine. Residues 124 to 434 (VQDNVLCVAP…QRIQNEITST (311 aa)) are condensation.

Belongs to the NRP synthetase family.

The protein operates within mycotoxin biosynthesis. Its function is as follows. Nonribosomal peptide synthetase; part of the gene cluster that mediates the biosynthesis of the host-selective toxins (HSTs) AAL-toxins, sphinganine-analog mycotoxins responsible for Alternaria stem canker on tomato by the tomato pathotype. The biosynthesis starts with the polyketide synthase ALT1-catalyzed C-16 carbon chain assembly from one starter acetyl-CoA unit with malonyl-CoA extender units. ALT1 also selectively transfers methyl groups at the first and the third cycle of chain elongation for AAL toxin. The C-16 polyketide chain is released from the enzyme by a nucleophilic attack of a carbanion, which is derived from R-carbon of glycin by decarboxylation, on the carbonyl carbon of polyketide acyl chain. This step is probably catalyzed by a pyridoxal 5'-phosphate-dependent aminoacyl transferase ALT4. The respective functions of the other enzymes encoded by the cluster have still to be elucidated. The sphingosine N-acyltransferase-like protein ALT7 seems not to act as a resistance/self-tolerance factor against the toxin in the toxin biosynthetic gene cluster, contrary to what is expected. This chain is Nonribosomal peptide synthetase ALT12, found in Alternaria alternata (Alternaria rot fungus).